We begin with the raw amino-acid sequence, 203 residues long: RNA pyrophosphohydrolase (203 aa).

A Nudix hydrolase domain is found at 6-149 (GFRPNVGIIL…KRNVYQMALT (144 aa)). A Nudix box motif is present at residues 38 to 59 (GGIKHGESPEQAMFRELHEEVG). The interval 170 to 203 (RAHRRDEGSEHNDHLDPTGPHDAGASVSEPKQAE) is disordered. The span at 173 to 185 (RRDEGSEHNDHLD) shows a compositional bias: basic and acidic residues.

Belongs to the Nudix hydrolase family. RppH subfamily. A divalent metal cation is required as a cofactor.

Accelerates the degradation of transcripts by removing pyrophosphate from the 5'-end of triphosphorylated RNA, leading to a more labile monophosphorylated state that can stimulate subsequent ribonuclease cleavage. This chain is RNA pyrophosphohydrolase, found in Leptothrix cholodnii (strain ATCC 51168 / LMG 8142 / SP-6) (Leptothrix discophora (strain SP-6)).